Here is a 141-residue protein sequence, read N- to C-terminus: Large ribosomal subunit protein uL11 (141 aa).

It belongs to the universal ribosomal protein uL11 family. In terms of assembly, part of the ribosomal stalk of the 50S ribosomal subunit. Interacts with L10 and the large rRNA to form the base of the stalk. L10 forms an elongated spine to which L12 dimers bind in a sequential fashion forming a multimeric L10(L12)X complex. Post-translationally, one or more lysine residues are methylated.

In terms of biological role, forms part of the ribosomal stalk which helps the ribosome interact with GTP-bound translation factors. The polypeptide is Large ribosomal subunit protein uL11 (Pelodictyon phaeoclathratiforme (strain DSM 5477 / BU-1)).